The chain runs to 369 residues: Maltose/maltodextrin import ATP-binding protein MalK (369 aa).

Positions 4–234 constitute an ABC transporter domain; it reads VQLRNVTKAW…PADRFVAGFI (231 aa). ATP is bound at residue 36-43; that stretch reads GPSGCGKS.

The protein belongs to the ABC transporter superfamily. Maltooligosaccharide importer (TC 3.A.1.1.1) family. The complex is composed of two ATP-binding proteins (MalK), two transmembrane proteins (MalG and MalK) and a solute-binding protein (MalE).

The protein resides in the cell inner membrane. It carries out the reaction D-maltose(out) + ATP + H2O = D-maltose(in) + ADP + phosphate + H(+). Its function is as follows. Part of the ABC transporter complex MalEFGK involved in maltose/maltodextrin import. Responsible for energy coupling to the transport system. This is Maltose/maltodextrin import ATP-binding protein MalK from Salmonella typhi.